Consider the following 376-residue polypeptide: S-adenosylmethionine synthase (376 aa).

Residue His-15 coordinates ATP. Residue Asp-17 participates in Mg(2+) binding. Glu-43 contacts K(+). The L-methionine site is built by Glu-56 and Gln-92. A flexible loop region spans residues 92 to 102; the sequence is QSKEIANQVDR. ATP is bound by residues 156–158, Asp-231, 237–238, Ala-254, and Lys-258; these read DMK and RK. Residue Asp-231 participates in L-methionine binding. Lys-262 contacts L-methionine.

This sequence belongs to the AdoMet synthase family. As to quaternary structure, homotetramer; dimer of dimers. The cofactor is Mg(2+). K(+) is required as a cofactor.

Its subcellular location is the cytoplasm. The enzyme catalyses L-methionine + ATP + H2O = S-adenosyl-L-methionine + phosphate + diphosphate. Its pathway is amino-acid biosynthesis; S-adenosyl-L-methionine biosynthesis; S-adenosyl-L-methionine from L-methionine: step 1/1. Its function is as follows. Catalyzes the formation of S-adenosylmethionine (AdoMet) from methionine and ATP. The overall synthetic reaction is composed of two sequential steps, AdoMet formation and the subsequent tripolyphosphate hydrolysis which occurs prior to release of AdoMet from the enzyme. In Mycoplasmopsis pulmonis (strain UAB CTIP) (Mycoplasma pulmonis), this protein is S-adenosylmethionine synthase.